The following is a 376-amino-acid chain: N-acetyldiaminopimelate deacetylase (376 aa).

D70 is an active-site residue. Catalysis depends on E129, which acts as the Proton acceptor.

Belongs to the peptidase M20A family. N-acetyldiaminopimelate deacetylase subfamily.

It catalyses the reaction N-acetyl-(2S,6S)-2,6-diaminopimelate + H2O = (2S,6S)-2,6-diaminopimelate + acetate. The protein operates within amino-acid biosynthesis; L-lysine biosynthesis via DAP pathway; LL-2,6-diaminopimelate from (S)-tetrahydrodipicolinate (acetylase route): step 3/3. Its function is as follows. Catalyzes the conversion of N-acetyl-diaminopimelate to diaminopimelate and acetate. The chain is N-acetyldiaminopimelate deacetylase from Geobacillus sp. (strain WCH70).